The chain runs to 222 residues: Secreted protein D (222 aa).

The first 22 residues, 1–22, serve as a signal peptide directing secretion; sequence MKIYYLFFVLIYLIYFINLVYC. Asn25 carries an N-linked (GlcNAc...) asparagine glycan.

Belongs to the Sct family.

Its subcellular location is the secreted. The protein is Secreted protein D of Dictyostelium discoideum (Social amoeba).